Consider the following 458-residue polypeptide: Cysteine--tRNA ligase (458 aa).

Cysteine 29 is a binding site for Zn(2+). The short motif at 31–41 (MTVYDLCHLGH) is the 'HIGH' region element. 3 residues coordinate Zn(2+): cysteine 213, histidine 238, and glutamate 242. The short motif at 270–274 (KMSKS) is the 'KMSKS' region element. Lysine 273 serves as a coordination point for ATP.

This sequence belongs to the class-I aminoacyl-tRNA synthetase family. As to quaternary structure, monomer. Requires Zn(2+) as cofactor.

It localises to the cytoplasm. It carries out the reaction tRNA(Cys) + L-cysteine + ATP = L-cysteinyl-tRNA(Cys) + AMP + diphosphate. This Acidovorax sp. (strain JS42) protein is Cysteine--tRNA ligase.